A 249-amino-acid polypeptide reads, in one-letter code: Sesquipedalian-1 (249 aa).

Positions 17-113 constitute a PH domain; that stretch reads PVDNAGFLYK…WVKALSRASF (97 aa). Disordered regions lie at residues 134–159 and 194–219; these read GGMA…LAPV and EATF…HGPL. Over residues 140 to 152 the composition is skewed to pro residues; the sequence is QPQPQSLPLPPSL. Phosphoserine is present on S213. Positions 223–235 match the F&amp;H motif; it reads PFARLHECYGQEI.

The protein belongs to the sesquipedalian family. As to quaternary structure, forms homodimers and heterodimers with PHETA2. Interacts with OCRL and INPP5B. Interaction with OCRL may be important for endosomal morphology and function.

It localises to the early endosome. The protein resides in the recycling endosome. It is found in the golgi apparatus. Its subcellular location is the trans-Golgi network. The protein localises to the cytoplasmic vesicle. It localises to the clathrin-coated vesicle. Plays a role in endocytic trafficking. Required for receptor recycling from endosomes, both to the trans-Golgi network and the plasma membrane. The chain is Sesquipedalian-1 from Homo sapiens (Human).